The following is a 415-amino-acid chain: MEKLQAQYCYLCSENIRKTNPFILNILQKLDEEIEKRPKEKFTVNIAGNNRLDSGQRITGEDFWLLSKTLRNQPCISGVDVRYNLIGDVGAFYAAKLLQKQPSITYLNLMFNDIGPEGGELIAKALHKNKTLKYLRMTGNKIENTGGMLFAAMLQMNSSLEKLDLGDCDLGLQCVIAFSTVLTQNQAIKGINLNRPILYGEQEESTVHIGHMLKENHVLVELHMCKHGMKNYGLQQLCNALYLNSSLRYLDVSCNKITRDGMVFLADVLKSNTTLEVLDLSFNRIETAGAKYLSETLTSHNRSLKALSVVSNKIEGEGLVALSQSMKTNLVLSNIYIWGNKFDEDTCVAYSDLIKSGRLKPDNTDVEPYMVDEHIYLSEVSNGLKRHYYWAPTYGETYMPSSSAGFALVPVGEHL.

LRR repeat units follow at residues 246–272 and 274–296; these read SLRY…LKSN and TLEV…LSET.

Interacts with NPM1 and NCL. In terms of tissue distribution, expressed in testis where it specifically localizes to germ cells (at protein level). Not detected in other tissues tested (at protein level). Expressed in pluripotent embryonic stem cells and multipotent adult germline stem cells.

The protein localises to the nucleus. The protein resides in the nucleolus. It localises to the cytoplasm. In terms of biological role, highly expressed in stem cells where it may be involved in regulation of pluripotency. In embryonic stem cells (ESCs), important for normal expression of the pluripotency regulators POU5F1/OCT4 and KLF4. Also important for expression of the ectodermal marker gene NES and the endodermal marker gene GATA4. Promotes stem cell proliferation in vitro. This chain is Leucine-rich repeat-containing protein 34, found in Mus musculus (Mouse).